We begin with the raw amino-acid sequence, 211 residues long: Lysozyme g (211 aa).

The N-terminal stretch at 1–26 (MLGKNDPMCLVLVLLGLTALLGICQG) is a signal peptide. 2 disulfide bridges follow: C30/C86 and C44/C55. Active-site residues include E99 and D112.

This sequence belongs to the glycosyl hydrolase 23 family. Granulocyte compartment of myelomonocytic cells.

The protein localises to the secreted. It carries out the reaction Hydrolysis of (1-&gt;4)-beta-linkages between N-acetylmuramic acid and N-acetyl-D-glucosamine residues in a peptidoglycan and between N-acetyl-D-glucosamine residues in chitodextrins.. This Gallus gallus (Chicken) protein is Lysozyme g.